The primary structure comprises 940 residues: Isoleucine--tRNA ligase (940 aa).

Residues 58-68 carry the 'HIGH' region motif; that stretch reads PYANGSIHIGH. Glutamate 564 lines the L-isoleucyl-5'-AMP pocket. Positions 605–609 match the 'KMSKS' region motif; it reads KMSKS. An ATP-binding site is contributed by lysine 608. Positions 903, 906, 923, and 926 each coordinate Zn(2+).

This sequence belongs to the class-I aminoacyl-tRNA synthetase family. IleS type 1 subfamily. Monomer. Zn(2+) serves as cofactor.

The protein localises to the cytoplasm. It carries out the reaction tRNA(Ile) + L-isoleucine + ATP = L-isoleucyl-tRNA(Ile) + AMP + diphosphate. Functionally, catalyzes the attachment of isoleucine to tRNA(Ile). As IleRS can inadvertently accommodate and process structurally similar amino acids such as valine, to avoid such errors it has two additional distinct tRNA(Ile)-dependent editing activities. One activity is designated as 'pretransfer' editing and involves the hydrolysis of activated Val-AMP. The other activity is designated 'posttransfer' editing and involves deacylation of mischarged Val-tRNA(Ile). This is Isoleucine--tRNA ligase from Shewanella sediminis (strain HAW-EB3).